Here is a 148-residue protein sequence, read N- to C-terminus: UPF0756 membrane protein ESA_02180 (148 aa).

4 helical membrane-spanning segments follow: residues I4–V24, V51–L71, L86–M106, and I112–V132.

This sequence belongs to the UPF0756 family.

The protein localises to the cell membrane. This is UPF0756 membrane protein ESA_02180 from Cronobacter sakazakii (strain ATCC BAA-894) (Enterobacter sakazakii).